The chain runs to 220 residues: Octanoyltransferase (220 aa).

The region spanning 31 to 217 (ENTPDEIWLV…HFAEILGYNA (187 aa)) is the BPL/LPL catalytic domain. Residues 70–77 (RGGQITYH), 146–148 (SLG), and 159–161 (GLA) each bind substrate. Cysteine 177 (acyl-thioester intermediate) is an active-site residue.

The protein belongs to the LipB family.

It is found in the cytoplasm. The enzyme catalyses octanoyl-[ACP] + L-lysyl-[protein] = N(6)-octanoyl-L-lysyl-[protein] + holo-[ACP] + H(+). The protein operates within protein modification; protein lipoylation via endogenous pathway; protein N(6)-(lipoyl)lysine from octanoyl-[acyl-carrier-protein]: step 1/2. Catalyzes the transfer of endogenously produced octanoic acid from octanoyl-acyl-carrier-protein onto the lipoyl domains of lipoate-dependent enzymes. Lipoyl-ACP can also act as a substrate although octanoyl-ACP is likely to be the physiological substrate. The sequence is that of Octanoyltransferase from Actinobacillus succinogenes (strain ATCC 55618 / DSM 22257 / CCUG 43843 / 130Z).